Reading from the N-terminus, the 318-residue chain is Malate dehydrogenase (318 aa).

NAD(+)-binding positions include 10–15 and aspartate 34; that span reads GAGNIG. Residues arginine 83 and arginine 89 each contribute to the substrate site. Residues asparagine 96 and 119-121 each bind NAD(+); that span reads ITN. 2 residues coordinate substrate: asparagine 121 and arginine 152. The Proton acceptor role is filled by histidine 176.

This sequence belongs to the LDH/MDH superfamily. MDH type 3 family.

It carries out the reaction (S)-malate + NAD(+) = oxaloacetate + NADH + H(+). In terms of biological role, catalyzes the reversible oxidation of malate to oxaloacetate. This Rhodospirillum rubrum (strain ATCC 11170 / ATH 1.1.1 / DSM 467 / LMG 4362 / NCIMB 8255 / S1) protein is Malate dehydrogenase.